The chain runs to 251 residues: 2,3-bisphosphoglycerate-dependent phosphoglycerate mutase (251 aa).

Residues 13–20, 26–27, R65, 92–95, K103, 119–120, and 186–187 each bind substrate; these read RHGESEWN, TG, ERHY, RR, and GN. H14 acts as the Tele-phosphohistidine intermediate in catalysis. E92 functions as the Proton donor/acceptor in the catalytic mechanism.

Belongs to the phosphoglycerate mutase family. BPG-dependent PGAM subfamily.

It carries out the reaction (2R)-2-phosphoglycerate = (2R)-3-phosphoglycerate. It functions in the pathway carbohydrate degradation; glycolysis; pyruvate from D-glyceraldehyde 3-phosphate: step 3/5. In terms of biological role, catalyzes the interconversion of 2-phosphoglycerate and 3-phosphoglycerate. The sequence is that of 2,3-bisphosphoglycerate-dependent phosphoglycerate mutase from Rhodococcus opacus (strain B4).